A 763-amino-acid polypeptide reads, in one-letter code: Endothelin-converting enzyme 2 (763 aa).

The Cytoplasmic segment spans residues Met-1–Glu-60. Phosphoserine is present on Ser-27. A helical; Signal-anchor for type II membrane protein membrane pass occupies residues Leu-61–Leu-81. At Trp-82–Trp-763 the chain is on the lumenal side. One can recognise a Peptidase M13 domain in the interval Thr-91 to Trp-763. 5 cysteine pairs are disulfide-bonded: Cys-92-Cys-97, Cys-115-Cys-748, Cys-123-Cys-708, Cys-179-Cys-428, and Cys-637-Cys-760. Residues Asn-159, Asn-163, Asn-204, Asn-264, Asn-309, Asn-376, and Asn-532 are each glycosylated (N-linked (GlcNAc...) asparagine). His-600 serves as a coordination point for Zn(2+). Glu-601 is an active-site residue. Residue His-604 coordinates Zn(2+). 2 N-linked (GlcNAc...) asparagine glycosylation sites follow: Asn-625 and Asn-633. Position 660 (Glu-660) interacts with Zn(2+). Asp-664 functions as the Proton donor in the catalytic mechanism.

The protein belongs to the peptidase M13 family. It depends on Zn(2+) as a cofactor.

Its subcellular location is the golgi apparatus membrane. The protein localises to the cytoplasmic vesicle. It is found in the secretory vesicle membrane. The enzyme catalyses Hydrolysis of the 21-Trp-|-Val-22 bond in big endothelin to form endothelin 1.. Converts big endothelin-1 to endothelin-1. Also involved in the processing of various neuroendocrine peptides, including neurotensin, angiotensin I, substance P, proenkephalin-derived peptides, and prodynorphin-derived peptides. May play a role in amyloid-beta processing. The polypeptide is Endothelin-converting enzyme 2 (Mus musculus (Mouse)).